We begin with the raw amino-acid sequence, 285 residues long: Sulfotransferase 2A6 (285 aa).

44–49 (KSGTNW) contacts 3'-phosphoadenylyl sulfate. Catalysis depends on His99, which acts as the Proton acceptor. 3'-phosphoadenylyl sulfate-binding positions include Arg121, Ser129, Tyr184, 218–223 (SSFQAM), and 247–249 (RKG).

It belongs to the sulfotransferase 1 family. Oligomer.

The protein localises to the cytoplasm. It is found in the cytosol. It catalyses the reaction an alcohol + 3'-phosphoadenylyl sulfate = an alkyl sulfate + adenosine 3',5'-bisphosphate + H(+). The catalysed reaction is glycolithocholate + 3'-phosphoadenylyl sulfate = sulfoglycolithocholate + adenosine 3',5'-bisphosphate + H(+). It carries out the reaction taurolithocholate + 3'-phosphoadenylyl sulfate = taurolithocholate 3-sulfate + adenosine 3',5'-bisphosphate + H(+). The enzyme catalyses 3beta-hydroxyandrost-5-en-17-one + 3'-phosphoadenylyl sulfate = dehydroepiandrosterone 3-sulfate + adenosine 3',5'-bisphosphate + H(+). Functionally, sulfotransferase that utilizes 3'-phospho-5'-adenylyl sulfate (PAPS) as sulfonate donor to catalyze the sulfonation of the hydroxyl group of hydroxysteroids and bile acids. This chain is Sulfotransferase 2A6, found in Mus musculus (Mouse).